The chain runs to 32 residues: Conotoxin Cltx-4 (32 aa).

4-hydroxyproline occurs at positions 2, 24, 28, and 30. Residue S32 is modified to Serine amide.

Post-translationally, contains 4 disulfide bonds. Expressed by the venom duct.

It localises to the secreted. The sequence is that of Conotoxin Cltx-4 from Californiconus californicus (California cone).